Here is a 300-residue protein sequence, read N- to C-terminus: MQRKIPRRIVDGVLLLDKPSGMTSNGALQTARRLLNAAKAGHTGTLDPMASGLLPLTFGEATKFSQILLDADKTYEAGVKLGTTTDTGDADGNVVAEHPVSVTREALEEVLSRFRGEIDQLPPMYSALKRDGKPLYEYARAGIEIEREVRRVTIHDLELIAFSGEHFSMRVRCSKGTYIRTLAMDIGAALGCGAYLDALRRTAIGDFDAARAVTLEALEASPAAMRDGLLEPVDALVAHFPKVELQPAEAAAILQGRELRKPEDGQGSVRLFCGGRFLGVGEWQSGSLRPKRLIATQTGQ.

Catalysis depends on Asp47, which acts as the Nucleophile.

Belongs to the pseudouridine synthase TruB family. Type 1 subfamily.

It catalyses the reaction uridine(55) in tRNA = pseudouridine(55) in tRNA. Functionally, responsible for synthesis of pseudouridine from uracil-55 in the psi GC loop of transfer RNAs. The polypeptide is tRNA pseudouridine synthase B (Azoarcus sp. (strain BH72)).